The following is a 100-amino-acid chain: Large ribosomal subunit protein uL23 (100 aa).

This sequence belongs to the universal ribosomal protein uL23 family. In terms of assembly, part of the 50S ribosomal subunit. Contacts protein L29, and trigger factor when it is bound to the ribosome.

Functionally, one of the early assembly proteins it binds 23S rRNA. One of the proteins that surrounds the polypeptide exit tunnel on the outside of the ribosome. Forms the main docking site for trigger factor binding to the ribosome. The polypeptide is Large ribosomal subunit protein uL23 (Mycobacterium tuberculosis (strain ATCC 25177 / H37Ra)).